Reading from the N-terminus, the 188-residue chain is Protein TIFY 9 (188 aa).

Residues 20–41 (DADDRHAKSGGSSASSSSSIRG) are disordered. Over residues 28–38 (SGGSSASSSSS) the composition is skewed to low complexity. Residues 80-114 (AAAAAAPMTLFYNGSVAVFDVSHDKAEAIMRMATE) form the Tify domain. A Jas motif is present at residues 135-160 (PLTRTKSLQRFLSKRKERLTSLGPYQ). The disordered stretch occupies residues 156-188 (LGPYQVGGPAAVGATTSTTTKSFLAKEEEHTAS). Basic and acidic residues predominate over residues 179-188 (LAKEEEHTAS).

This sequence belongs to the TIFY/JAZ family. As to quaternary structure, interacts with COI1A and COI2 in a coronatine-dependent manner. Coronatine is an analog of jasmonoyl isoleucine (JA-Ile). In terms of processing, ubiquitinated. Targeted for degradation by the SCF(COI1) E3 ubiquitin ligase-proteasome pathway during jasmonate signaling.

Functionally, repressor of jasmonate responses. The polypeptide is Protein TIFY 9 (Oryza sativa subsp. japonica (Rice)).